We begin with the raw amino-acid sequence, 199 residues long: Holliday junction branch migration complex subunit RuvA (199 aa).

The domain I stretch occupies residues 1-63 (MIDYIKGNLV…EDSQRLFGFT (63 aa)). The domain II stretch occupies residues 64-142 (TRTERLLFEK…DMAPMLEPAA (79 aa)). Positions 143 to 153 (GADKQQKNPQL) are flexible linker. The interval 153 to 199 (LEDALEALRALGYVEKELKKVEKQLKAETLETDEYIRRALALMLKRP) is domain III.

The protein belongs to the RuvA family. In terms of assembly, homotetramer. Forms an RuvA(8)-RuvB(12)-Holliday junction (HJ) complex. HJ DNA is sandwiched between 2 RuvA tetramers; dsDNA enters through RuvA and exits via RuvB. An RuvB hexamer assembles on each DNA strand where it exits the tetramer. Each RuvB hexamer is contacted by two RuvA subunits (via domain III) on 2 adjacent RuvB subunits; this complex drives branch migration. In the full resolvosome a probable DNA-RuvA(4)-RuvB(12)-RuvC(2) complex forms which resolves the HJ.

It is found in the cytoplasm. Functionally, the RuvA-RuvB-RuvC complex processes Holliday junction (HJ) DNA during genetic recombination and DNA repair, while the RuvA-RuvB complex plays an important role in the rescue of blocked DNA replication forks via replication fork reversal (RFR). RuvA specifically binds to HJ cruciform DNA, conferring on it an open structure. The RuvB hexamer acts as an ATP-dependent pump, pulling dsDNA into and through the RuvAB complex. HJ branch migration allows RuvC to scan DNA until it finds its consensus sequence, where it cleaves and resolves the cruciform DNA. This chain is Holliday junction branch migration complex subunit RuvA, found in Shouchella clausii (strain KSM-K16) (Alkalihalobacillus clausii).